Here is a 472-residue protein sequence, read N- to C-terminus: MAGSGWGLPRLDGFILTERLGSGTYATVYKAYAKKATREVVAIKCVAKKSLNKASVENLLTEIEILKGIRHPHIVQLKDFQWDNDNIYLIMEFCAGGDLSRFIHTRRILPEKVARVFMQQLASALQFLHERNISHLDLKPQNILLSSLEKPHLKLADFGFAQHMSPWDEKHVLRGSPLYMAPEMVCRRQYDARVDLWSVGVILYEALFGQPPFASRSFSELEEKIRSNRVIELPLRPQLSLDCRDLLQRLLERDPSHRISFQDFFAHPWVDLEHMPSGESLAQATALVVEAVKKDQEGDAAAALSLYCKALDFFVPALHYEVDAQRKEAIKAKVGQYVSRAEELKAIVSSSNQALLRQGTTGQELLREMARDKPRLLAALEVASAAMAKEEEAGKEQDALDLYQHSLGELLLLLAAEAPGRRRELLHTEVQNLMARAEYLKEQIKIRESHWEAESLDKEGLSESVRSSCTLQ.

Residues 14–270 (FILTERLGSG…FQDFFAHPWV (257 aa)) form the Protein kinase domain. ATP contacts are provided by residues 20 to 28 (LGSGTYATV) and Lys44. Catalysis depends on Asp137, which acts as the Proton acceptor. Ser176 is modified (phosphoserine). The 67-residue stretch at 281–347 (LAQATALVVE…VSRAEELKAI (67 aa)) folds into the MIT 1 domain. 2 positions are modified to phosphoserine; by autocatalysis: Ser350 and Ser384. An MIT 2 domain is found at 376 to 444 (LLAALEVASA…ARAEYLKEQI (69 aa)). Ser464 carries the phosphoserine modification.

This sequence belongs to the protein kinase superfamily. Ser/Thr protein kinase family. APG1/unc-51/ULK1 subfamily. In terms of assembly, interacts (via protein kinase domain) with SUFU. In terms of processing, autophosphorylated. Autophosphorylation is blocked by interaction with SUFU.

It localises to the cytoplasm. It catalyses the reaction L-seryl-[protein] + ATP = O-phospho-L-seryl-[protein] + ADP + H(+). It carries out the reaction L-threonyl-[protein] + ATP = O-phospho-L-threonyl-[protein] + ADP + H(+). In terms of biological role, serine/threonine protein kinase that acts as a regulator of Sonic hedgehog (SHH) signaling and autophagy. Acts as a negative regulator of SHH signaling in the absence of SHH ligand: interacts with SUFU, thereby inactivating the protein kinase activity and preventing phosphorylation of GLI proteins (GLI1, GLI2 and/or GLI3). Positively regulates SHH signaling in the presence of SHH: dissociates from SUFU, autophosphorylates and mediates phosphorylation of GLI2, activating it and promoting its nuclear translocation. Phosphorylates in vitro GLI2, as well as GLI1 and GLI3, although less efficiently. Also acts as a regulator of autophagy: following cellular senescence, able to induce autophagy. The protein is Serine/threonine-protein kinase ULK3 (Ulk3) of Rattus norvegicus (Rat).